The chain runs to 1940 residues: Myosin-3 (1940 aa).

The Myosin N-terminal SH3-like domain occupies 33–82 (DAKTYCFVVDSKEEYAKGKIKSSQDGKVTVETEDNRTLVVKPEDVYAMNP). Residues 86–779 (DKIEDMAMLT…LLGTLEEMRD (694 aa)) enclose the Myosin motor domain. Lysine 130 carries the post-translational modification N6,N6,N6-trimethyllysine. 179–186 (GESGAGKT) provides a ligand contact to ATP. 2 actin-binding regions span residues 656–678 (LNKL…IPNE) and 758–772 (KFGH…GLLG). The 30-residue stretch at 782–811 (LAKLITRTQAVCRGFLMRVEFQKMMQRRES) folds into the IQ domain. Positions 840–1933 (LLKSAETEKE…KTRDFTSSRM (1094 aa)) form a coiled coil. The tract at residues 1260 to 1289 (ARGKNEETQRSLSELTTQKSRLQTEAGELS) is disordered. Over residues 1269–1282 (RSLSELTTQKSRLQ) the composition is skewed to polar residues.

It belongs to the TRAFAC class myosin-kinesin ATPase superfamily. Myosin family. As to quaternary structure, muscle myosin is a hexameric protein that consists of 2 heavy chain subunits (MHC), 2 alkali light chain subunits (MLC) and 2 regulatory light chain subunits (MLC-2).

The protein localises to the cytoplasm. It localises to the myofibril. Functionally, muscle contraction. This chain is Myosin-3 (Myh3), found in Rattus norvegicus (Rat).